A 280-amino-acid polypeptide reads, in one-letter code: DNA repair protein XRCC2 (280 aa).

Ser10 carries the phosphoserine modification.

Belongs to the RecA family. RAD51 subfamily. As to quaternary structure, interacts with RAD51D. Part of the BCDX2 complex consisting of RAD51B, RAD51C, RAD51D and XRCC2; the complex has a ring-like structure arranged into a flat disk around a central channel. In the absence of DNA, the BCDX2 subcomplex XRCC2:RAD51D formed a multimeric ring structure; in the presence of single-stranded DNA it formed a filamentous structure with the ssDNA.

Its subcellular location is the nucleus. It localises to the cytoplasm. The protein localises to the cytoskeleton. It is found in the microtubule organizing center. The protein resides in the centrosome. Its function is as follows. Involved in the homologous recombination repair (HRR) pathway of double-stranded DNA, thought to repair chromosomal fragmentation, translocations and deletions. Part of the RAD51 paralog protein complex BCDX2 which acts in the BRCA1-BRCA2-dependent HR pathway. Upon DNA damage, BCDX2 acts downstream of BRCA2 recruitment and upstream of RAD51 recruitment. BCDX2 binds predominantly to the intersection of the four duplex arms of the Holliday junction and to junction of replication forks. The BCDX2 complex was originally reported to bind single-stranded DNA, single-stranded gaps in duplex DNA and specifically to nicks in duplex DNA. This chain is DNA repair protein XRCC2 (XRCC2), found in Homo sapiens (Human).